The sequence spans 238 residues: MEESINPIISIGPVIFNLTMLAMTLLIVGVIFVFIYWASRNMTLKPKGKQNVLEYVYDFVIGFTEPNIGSRYMKDYSLFFLCLFLFMVIANNLGLMTKLQTIDGTNWWSSPTANLQYDLTLSFLVILLTHIESVRRRGFKKSIKSFMSPVFVIPMNILEEFTNFLSLALRIFGNIFAGEVMTSLLLLLSHQAIYWYPVAFGANLAWTAFSVFISCIQAYVFTLLTSVYLGNKINIEEE.

5 helical membrane passes run 15–35 (IFNL…FVFI), 76–96 (YSLF…LGLM), 111–131 (PTAN…LTHI), 167–187 (LALR…LLLL), and 208–230 (AFSV…VYLG).

The protein belongs to the ATPase A chain family. In terms of assembly, F-type ATPases have 2 components, CF(1) - the catalytic core - and CF(0) - the membrane proton channel. CF(1) has five subunits: alpha(3), beta(3), gamma(1), delta(1), epsilon(1). CF(0) has three main subunits: a(1), b(2) and c(9-12). The alpha and beta chains form an alternating ring which encloses part of the gamma chain. CF(1) is attached to CF(0) by a central stalk formed by the gamma and epsilon chains, while a peripheral stalk is formed by the delta and b chains.

It localises to the cell membrane. Functionally, key component of the proton channel; it plays a direct role in the translocation of protons across the membrane. This chain is ATP synthase subunit a, found in Streptococcus pneumoniae (strain ATCC BAA-255 / R6).